We begin with the raw amino-acid sequence, 552 residues long: Non-structural protein NS1 (552 aa).

Belongs to the orbivirus non-structural protein NS1 family.

The sequence is that of Non-structural protein NS1 (Segment-5) from Antilocapra americana (Pronghorn).